The sequence spans 473 residues: UDP-glycosyltransferase 91D2 (473 aa).

His-26 serves as the catalytic Proton acceptor. His-26 provides a ligand contact to an anthocyanidin. The Charge relay role is filled by Asp-121. UDP-alpha-D-glucose contacts are provided by Ala-344, Gln-346, His-361, Ser-366, and Glu-369. Residue Gly-384 coordinates an anthocyanidin. Residues Asp-385 and Gln-386 each coordinate UDP-alpha-D-glucose.

It belongs to the UDP-glycosyltransferase family.

It catalyses the reaction steviolmonoside + UDP-alpha-D-glucose = steviolbioside + UDP + H(+). It carries out the reaction rubusoside + UDP-alpha-D-glucose = stevioside + UDP + H(+). The catalysed reaction is stevioside + UDP-alpha-D-glucose = rebaudioside E + UDP + H(+). The enzyme catalyses rebaudioside A + UDP-alpha-D-glucose = rebaudioside D + UDP + H(+). Involved in the biosynthesis of steviol glycosides in leaves. Converts the mono-glycoside steviolmonoside to the bi-glycoside steviolbioside. Converts the bi-glycoside rubusoside to the tri-glycoside stevioside. Converts the tri-glycoside stevioside to the tetra-glycoside rebaudioside E. Converts the tetra-glycoside rebaudioside A to the penta-glycoside rebaudioside E. In Stevia rebaudiana (Stevia), this protein is UDP-glycosyltransferase 91D2.